Reading from the N-terminus, the 336-residue chain is Dihydroorotate dehydrogenase (quinone) (336 aa).

Residues 62-66 (AGLDK) and threonine 86 each bind FMN. Lysine 66 serves as a coordination point for substrate. Residue 111–115 (NRMGF) coordinates substrate. The FMN site is built by asparagine 139 and asparagine 172. Asparagine 172 is a binding site for substrate. The active-site Nucleophile is the serine 175. Asparagine 177 provides a ligand contact to substrate. FMN contacts are provided by lysine 217 and threonine 245. 246–247 (NT) contributes to the substrate binding site. FMN is bound by residues glycine 268, glycine 297, and 318 to 319 (YS).

The protein belongs to the dihydroorotate dehydrogenase family. Type 2 subfamily. In terms of assembly, monomer. FMN serves as cofactor.

The protein localises to the cell membrane. The enzyme catalyses (S)-dihydroorotate + a quinone = orotate + a quinol. It participates in pyrimidine metabolism; UMP biosynthesis via de novo pathway; orotate from (S)-dihydroorotate (quinone route): step 1/1. Functionally, catalyzes the conversion of dihydroorotate to orotate with quinone as electron acceptor. The protein is Dihydroorotate dehydrogenase (quinone) of Vibrio atlanticus (strain LGP32) (Vibrio splendidus (strain Mel32)).